A 620-amino-acid chain; its full sequence is Chaperone protein HtpG (620 aa).

Residues 1–334 (MTTTDTAPQS…SEDLPLNLSR (334 aa)) form an a; substrate-binding region. The b stretch occupies residues 335–548 (EMLQNNPQLA…GLGPDRALER (214 aa)). The segment at 549 to 620 (MLAQQNRGAA…RLNRLVLRAL (72 aa)) is c.

Belongs to the heat shock protein 90 family. Homodimer.

Its subcellular location is the cytoplasm. Functionally, molecular chaperone. Has ATPase activity. This Rhodopseudomonas palustris (strain BisB18) protein is Chaperone protein HtpG.